Reading from the N-terminus, the 104-residue chain is uncharacterized protein (104 aa).

This is an uncharacterized protein from Orgyia pseudotsugata (Douglas-fir tussock moth).